Consider the following 240-residue polypeptide: uncharacterized protein (240 aa).

The tract at residues methionine 1 to isoleucine 27 is disordered. Residues serine 59 and serine 95 each carry the phosphoserine modification. The tract at residues arginine 189–lysine 227 is disordered. Over residues alanine 202 to glycine 218 the composition is skewed to polar residues.

This is an uncharacterized protein from Saccharomyces cerevisiae (strain ATCC 204508 / S288c) (Baker's yeast).